Consider the following 630-residue polypeptide: uncharacterized protein (630 aa).

4 consecutive transmembrane segments (helical) span residues 254–274, 504–524, 564–584, and 601–621; these read MFYA…ELRV, IALL…LTSI, MIFA…SMVF, and IIVI…AVLF.

Its subcellular location is the cell membrane. This is an uncharacterized protein from Mycoplasma genitalium (strain ATCC 33530 / DSM 19775 / NCTC 10195 / G37) (Mycoplasmoides genitalium).